Here is a 269-residue protein sequence, read N- to C-terminus: Formamidopyrimidine-DNA glycosylase (269 aa).

Pro-2 functions as the Schiff-base intermediate with DNA in the catalytic mechanism. Catalysis depends on Glu-3, which acts as the Proton donor. The active-site Proton donor; for beta-elimination activity is Lys-57. DNA is bound by residues His-90, Arg-109, and Lys-150. The FPG-type zinc-finger motif lies at Gln-235–Lys-269. The active-site Proton donor; for delta-elimination activity is the Arg-259.

This sequence belongs to the FPG family. As to quaternary structure, monomer. Zn(2+) is required as a cofactor.

It carries out the reaction Hydrolysis of DNA containing ring-opened 7-methylguanine residues, releasing 2,6-diamino-4-hydroxy-5-(N-methyl)formamidopyrimidine.. The catalysed reaction is 2'-deoxyribonucleotide-(2'-deoxyribose 5'-phosphate)-2'-deoxyribonucleotide-DNA = a 3'-end 2'-deoxyribonucleotide-(2,3-dehydro-2,3-deoxyribose 5'-phosphate)-DNA + a 5'-end 5'-phospho-2'-deoxyribonucleoside-DNA + H(+). Functionally, involved in base excision repair of DNA damaged by oxidation or by mutagenic agents. Acts as a DNA glycosylase that recognizes and removes damaged bases. Has a preference for oxidized purines, such as 7,8-dihydro-8-oxoguanine (8-oxoG). Has AP (apurinic/apyrimidinic) lyase activity and introduces nicks in the DNA strand. Cleaves the DNA backbone by beta-delta elimination to generate a single-strand break at the site of the removed base with both 3'- and 5'-phosphates. The polypeptide is Formamidopyrimidine-DNA glycosylase (Salmonella newport (strain SL254)).